Reading from the N-terminus, the 266-residue chain is UPF0246 protein PHZ_c0561 (266 aa).

A disordered region spans residues 245–266; sequence DEEFTFARPQPPPPAASRNKED.

It belongs to the UPF0246 family.

This is UPF0246 protein PHZ_c0561 from Phenylobacterium zucineum (strain HLK1).